We begin with the raw amino-acid sequence, 200 residues long: LHFPL tetraspan subfamily member 6 protein (200 aa).

The signal sequence occupies residues 1 to 21 (MASSLTCTGVIWALLSFLCAA). Helical transmembrane passes span 84–104 (ICTI…LTAL), 123–143 (GIQF…PLGW), and 166–186 (IGWA…LCTW).

The protein belongs to the LHFP family. As to expression, pancreas, kidney, skeletal muscle, liver, lung brain, heart, colon, small intestine, uterus, testis, prostate, thymus, spleen and placenta.

It is found in the membrane. The chain is LHFPL tetraspan subfamily member 6 protein from Homo sapiens (Human).